Reading from the N-terminus, the 6919-residue chain is Nonribosomal peptide synthetase easA (6919 aa).

A Carrier 1 domain is found at 17-93; sequence TNNEVVEKDI…ELCQSVKLAE (77 aa). An O-(pantetheine 4'-phosphoryl)serine modification is found at Ser54. The epimerization 1 stretch occupies residues 123 to 427; it reads EAQKLYASTK…FLRKVKDTRM (305 aa). The disordered stretch occupies residues 294–319; that stretch reads FRRSTPVESTNDERNTNERQHNRHQN. The segment covering 304–319 has biased composition (basic and acidic residues); it reads NDERNTNERQHNRHQN. The interval 604–981 is condensation 1; that stretch reads LNVELDCGRL…ISTTQEINQL (378 aa). The tract at residues 1003–1394 is adenylation 1; sequence QRLRRPDAWA…GRRDTQIKVR (392 aa). One can recognise a Carrier 2 domain in the interval 1531-1608; that stretch reads EPETLLERQV…QLAQTAEVKD (78 aa). Position 1569 is an O-(pantetheine 4'-phosphoryl)serine (Ser1569). Residues 1617–2031 form an epimerization 2 region; sequence LLSPMQKWYF…ANAISALGTE (415 aa). The interval 2072–2509 is condensation 2; the sequence is VEDIYPCSPI…VGQLNTVTPK (438 aa). The adenylation 2 stretch occupies residues 2541 to 2930; it reads RPNATAVCAW…ARKDSQVKVR (390 aa). Positions 3067–3143 constitute a Carrier 3 domain; the sequence is APSTFMEKKL…EMAAHLEAQM (77 aa). Ser3104 carries the O-(pantetheine 4'-phosphoryl)serine modification. The interval 3188–3599 is condensation 3; that stretch reads EDVYPCTPLQ…LLSKDEARRL (412 aa). The interval 3620–4018 is adenylation 3; the sequence is QHVSTNPYAP…GRRDGQVKIR (399 aa). In terms of domain architecture, Carrier 4 spans 4151 to 4228; the sequence is TPSTSEEKNI…QLAKKAVIKT (78 aa). At Ser4188 the chain carries O-(pantetheine 4'-phosphoryl)serine. Residues 4282–4708 form a condensation 4 region; that stretch reads ESIYYCSPIQ…EIDVIPTGDV (427 aa). The segment at 4732–5133 is adenylation 4; that stretch reads EQALSQPGAQ…GRADGQIKIR (402 aa). Residues 5260 to 5337 form the Carrier 5 domain; that stretch reads ALSTETERRL…DMANTIANSE (78 aa). The residue at position 5296 (Ser5296) is an O-(pantetheine 4'-phosphoryl)serine. The condensation 5 stretch occupies residues 5380–5775; the sequence is EDAYPCTPLQ…VFGQLQSAAN (396 aa). The segment at 5824-6216 is adenylation 5; sequence SCPDAQAVHA…IGRRDTQVKI (393 aa). Positions 6344–6421 constitute a Carrier 6 domain; the sequence is EPATVTERLL…DMATLIDRKT (78 aa). Ser6381 is subject to O-(pantetheine 4'-phosphoryl)serine.

It functions in the pathway antibiotic biosynthesis. Its function is as follows. Nonribosomal peptide synthetase; part of the gene cluster that mediates the biosynthesis of emericellamides, secondary metabolites acting as antibiotics. The biosynthesis of emericellamides initiates from the highly reducing polyketide synthase easB which catalyzes the formation of the linear polyketide chain. EasB produces several polyketides that can be further processed by the downstream enzymes. The polyketides are released from easB as linear polyketide carboxylic acids, which are converted to CoA thioesters by the acyl-CoA ligase easD. The substrates are then loaded onto the acyltransferase easC, which shuttles them to the first thiolation (T) domain of the nonribosomal peptide synthetase easA. EasA then performs condensation of the polyketides with one glycine, two alanine, one valine and one leucine residues. A last step of cyclization leads to the production of emericellamides. The sequence is that of Nonribosomal peptide synthetase easA from Emericella nidulans (strain FGSC A4 / ATCC 38163 / CBS 112.46 / NRRL 194 / M139) (Aspergillus nidulans).